The chain runs to 582 residues: Zinc finger protein 614 (582 aa).

The KRAB domain maps to Leu-8–Pro-79. A C2H2-type 1 zinc finger spans residues His-202–His-224. The C2H2-type 2; degenerate zinc-finger motif lies at Lys-254–His-278. C2H2-type zinc fingers lie at residues Tyr-284 to His-306, Tyr-312 to His-334, Tyr-340 to His-362, Tyr-368 to His-390, Tyr-396 to His-418, Tyr-424 to His-446, Tyr-452 to His-474, Phe-480 to His-502, Tyr-508 to His-530, and Tyr-536 to His-558.

The protein belongs to the krueppel C2H2-type zinc-finger protein family.

It is found in the nucleus. May be involved in transcriptional regulation. The chain is Zinc finger protein 614 (ZNF614) from Macaca fascicularis (Crab-eating macaque).